Consider the following 208-residue polypeptide: Thiamine-phosphate synthase (208 aa).

Residues 36–40 and aspartate 68 contribute to the 4-amino-2-methyl-5-(diphosphooxymethyl)pyrimidine site; that span reads QLRMK. Aspartate 69 and aspartate 88 together coordinate Mg(2+). Threonine 107 lines the 4-amino-2-methyl-5-(diphosphooxymethyl)pyrimidine pocket. Residue 133-135 coordinates 2-[(2R,5Z)-2-carboxy-4-methylthiazol-5(2H)-ylidene]ethyl phosphate; that stretch reads TTT. Lysine 136 lines the 4-amino-2-methyl-5-(diphosphooxymethyl)pyrimidine pocket. Glycine 169 serves as a coordination point for 2-[(2R,5Z)-2-carboxy-4-methylthiazol-5(2H)-ylidene]ethyl phosphate.

It belongs to the thiamine-phosphate synthase family. It depends on Mg(2+) as a cofactor.

The enzyme catalyses 2-[(2R,5Z)-2-carboxy-4-methylthiazol-5(2H)-ylidene]ethyl phosphate + 4-amino-2-methyl-5-(diphosphooxymethyl)pyrimidine + 2 H(+) = thiamine phosphate + CO2 + diphosphate. It catalyses the reaction 2-(2-carboxy-4-methylthiazol-5-yl)ethyl phosphate + 4-amino-2-methyl-5-(diphosphooxymethyl)pyrimidine + 2 H(+) = thiamine phosphate + CO2 + diphosphate. The catalysed reaction is 4-methyl-5-(2-phosphooxyethyl)-thiazole + 4-amino-2-methyl-5-(diphosphooxymethyl)pyrimidine + H(+) = thiamine phosphate + diphosphate. The protein operates within cofactor biosynthesis; thiamine diphosphate biosynthesis; thiamine phosphate from 4-amino-2-methyl-5-diphosphomethylpyrimidine and 4-methyl-5-(2-phosphoethyl)-thiazole: step 1/1. Its function is as follows. Condenses 4-methyl-5-(beta-hydroxyethyl)thiazole monophosphate (THZ-P) and 2-methyl-4-amino-5-hydroxymethyl pyrimidine pyrophosphate (HMP-PP) to form thiamine monophosphate (TMP). The sequence is that of Thiamine-phosphate synthase from Phocaeicola vulgatus (strain ATCC 8482 / DSM 1447 / JCM 5826 / CCUG 4940 / NBRC 14291 / NCTC 11154) (Bacteroides vulgatus).